Reading from the N-terminus, the 256-residue chain is MLIIPAIDIKDGRCVRLTRGDFNQQKIYLDNPCDMAIIWRKQNAKMLHVVDLDAALTGEMVNFLKIEQIVRELDIPLQVGGGIRSLDAVKRYLDIGVGRVVIGSAAVTNPGLIEEVLKIYRPSKIVVGIDAENGIPKIKGWTESCGMKDYELGLEMKQMGIERVVYTDISKDGMMQGFGYESTKRFAEMTGMKVTASGGVTSSDDLMKLVGLQQYGVDSVIIGKALYECNFPCQELWYNFEEDICIDHNFSTARKK.

Aspartate 8 (proton acceptor) is an active-site residue. Aspartate 130 acts as the Proton donor in catalysis.

Belongs to the HisA/HisF family.

It localises to the cytoplasm. It catalyses the reaction 1-(5-phospho-beta-D-ribosyl)-5-[(5-phospho-beta-D-ribosylamino)methylideneamino]imidazole-4-carboxamide = 5-[(5-phospho-1-deoxy-D-ribulos-1-ylimino)methylamino]-1-(5-phospho-beta-D-ribosyl)imidazole-4-carboxamide. It participates in amino-acid biosynthesis; L-histidine biosynthesis; L-histidine from 5-phospho-alpha-D-ribose 1-diphosphate: step 4/9. This chain is 1-(5-phosphoribosyl)-5-[(5-phosphoribosylamino)methylideneamino] imidazole-4-carboxamide isomerase, found in Chlorobium phaeobacteroides (strain DSM 266 / SMG 266 / 2430).